The primary structure comprises 175 residues: Archaemetzincin (175 aa).

Histidine 125 contacts Zn(2+). The active-site Proton acceptor is the glutamate 126. The Zn(2+) site is built by histidine 129, histidine 135, cysteine 136, cysteine 141, cysteine 160, and cysteine 163.

The protein belongs to the peptidase M54 family. As to quaternary structure, monomer. It depends on Zn(2+) as a cofactor.

Probable zinc metalloprotease whose natural substrate is unknown. Does not show endo- or exopeptidase activity against resorufin labeled casein, p-nitroanilide (pNA), amidomethylcoumarin (AMC) (one to three amino acids in length), and hippuryl-aminoacid substrates. This chain is Archaemetzincin, found in Methanopyrus kandleri (strain AV19 / DSM 6324 / JCM 9639 / NBRC 100938).